A 400-amino-acid polypeptide reads, in one-letter code: CCA-adding enzyme (400 aa).

The ATP site is built by G28 and R31. Residues G28 and R31 each coordinate CTP. Positions 41 and 43 each coordinate Mg(2+). Positions 112, 155, 158, 161, and 164 each coordinate ATP. CTP contacts are provided by R112, D155, R158, R161, and R164.

The protein belongs to the tRNA nucleotidyltransferase/poly(A) polymerase family. Bacterial CCA-adding enzyme type 3 subfamily. Homodimer. The cofactor is Mg(2+).

The enzyme catalyses a tRNA precursor + 2 CTP + ATP = a tRNA with a 3' CCA end + 3 diphosphate. It catalyses the reaction a tRNA with a 3' CCA end + 2 CTP + ATP = a tRNA with a 3' CCACCA end + 3 diphosphate. Its function is as follows. Catalyzes the addition and repair of the essential 3'-terminal CCA sequence in tRNAs without using a nucleic acid template. Adds these three nucleotides in the order of C, C, and A to the tRNA nucleotide-73, using CTP and ATP as substrates and producing inorganic pyrophosphate. tRNA 3'-terminal CCA addition is required both for tRNA processing and repair. Also involved in tRNA surveillance by mediating tandem CCA addition to generate a CCACCA at the 3' terminus of unstable tRNAs. While stable tRNAs receive only 3'-terminal CCA, unstable tRNAs are marked with CCACCA and rapidly degraded. The polypeptide is CCA-adding enzyme (Oceanobacillus iheyensis (strain DSM 14371 / CIP 107618 / JCM 11309 / KCTC 3954 / HTE831)).